A 576-amino-acid polypeptide reads, in one-letter code: CTP synthase (576 aa).

The Glutamine amidotransferase type-1 domain occupies 305–559 (QIALVGKYTH…LGLVAAAANI (255 aa)). Catalysis depends on for GATase activity residues Cys404, His535, and Glu537.

This sequence belongs to the CTP synthase family.

The enzyme catalyses UTP + L-glutamine + ATP + H2O = CTP + L-glutamate + ADP + phosphate + 2 H(+). It participates in pyrimidine metabolism; CTP biosynthesis via de novo pathway; CTP from UDP: step 2/2. Its function is as follows. Catalyzes the ATP-dependent amination of UTP to CTP with either L-glutamine or ammonia as the source of nitrogen. The polypeptide is CTP synthase (URA7) (Eremothecium gossypii (strain ATCC 10895 / CBS 109.51 / FGSC 9923 / NRRL Y-1056) (Yeast)).